Reading from the N-terminus, the 222-residue chain is UPF0758 protein YicR (222 aa).

One can recognise an MPN domain in the interval 100 to 222 (PLLSPEMTRE…YVSFAERGWI (123 aa)). Residues histidine 171, histidine 173, and aspartate 184 each coordinate Zn(2+). A JAMM motif motif is present at residues 171–184 (HNHPSGCAEPSKAD).

Belongs to the UPF0758 family. YicR subfamily.

The sequence is that of UPF0758 protein YicR from Escherichia coli O81 (strain ED1a).